The primary structure comprises 200 residues: Orotate phosphoribosyltransferase (200 aa).

Residues arginine 95, lysine 99, histidine 101, and 121-129 (DDVATTGGS) each bind 5-phospho-alpha-D-ribose 1-diphosphate. Residues threonine 125 and arginine 153 each contribute to the orotate site.

Belongs to the purine/pyrimidine phosphoribosyltransferase family. PyrE subfamily. In terms of assembly, homodimer. The cofactor is Mg(2+).

It catalyses the reaction orotidine 5'-phosphate + diphosphate = orotate + 5-phospho-alpha-D-ribose 1-diphosphate. The protein operates within pyrimidine metabolism; UMP biosynthesis via de novo pathway; UMP from orotate: step 1/2. Functionally, catalyzes the transfer of a ribosyl phosphate group from 5-phosphoribose 1-diphosphate to orotate, leading to the formation of orotidine monophosphate (OMP). This Cenarchaeum symbiosum (strain A) protein is Orotate phosphoribosyltransferase.